The following is a 343-amino-acid chain: UDP-3-O-acylglucosamine N-acyltransferase 2 (343 aa).

The active-site Proton acceptor is His-251.

This sequence belongs to the transferase hexapeptide repeat family. LpxD subfamily. Homotrimer.

The catalysed reaction is a UDP-3-O-[(3R)-3-hydroxyacyl]-alpha-D-glucosamine + a (3R)-hydroxyacyl-[ACP] = a UDP-2-N,3-O-bis[(3R)-3-hydroxyacyl]-alpha-D-glucosamine + holo-[ACP] + H(+). It participates in bacterial outer membrane biogenesis; LPS lipid A biosynthesis. Functionally, catalyzes the N-acylation of UDP-3-O-acylglucosamine using 3-hydroxyacyl-ACP as the acyl donor. Is involved in the biosynthesis of lipid A, a phosphorylated glycolipid that anchors the lipopolysaccharide to the outer membrane of the cell. This Legionella pneumophila subsp. pneumophila (strain Philadelphia 1 / ATCC 33152 / DSM 7513) protein is UDP-3-O-acylglucosamine N-acyltransferase 2.